The chain runs to 248 residues: PF03932 family protein CutC (248 aa).

Belongs to the CutC family. As to quaternary structure, homodimer.

It localises to the cytoplasm. The protein is PF03932 family protein CutC of Salmonella paratyphi A (strain AKU_12601).